The following is a 466-amino-acid chain: MFKLTPREIVEELDKYIIGQQEAKKAVAIALRNRYRRKLLPDELREEIYPKNIIMIGSTGVGKTEIARRLARLVKAPFIKVEASKFTEVGYVGRDVDSMVRDLVETSIRLVKQEKMAAVEQKGRQMAEERIVDILLPFDGRKSKSPKNPFEFLLGSIQERDDVDDESERRRREIGQRREILRQKINRLELEDETIEIEVEEKNPSFMEIFSGSGVEEMGINLQDMLGNLMPRNKKKRKVSIAEARRILTYEESQRLLDMDEIHREGIKRAEEDGIIFLDEIDKIASKESNYGPDVSRGGVQRDILPIVEGSTVITKYGPARTDHVLFIAAGAFHVSKPSDLIPELQGRFPIRVELESLKKEDLKRILTEPNNSLIKQYIALLSTEKLTMDFTPEAIDYIAERAYEVNSRTEDIGARRLHTVMEKLLEDLLFNSPDMAGEKLVIDIDYVAERLDRIVEDEDLSRYIL.

ATP contacts are provided by residues Ile18, 60-65 (GVGKTE), Asp279, Glu344, and Arg416.

Belongs to the ClpX chaperone family. HslU subfamily. A double ring-shaped homohexamer of HslV is capped on each side by a ring-shaped HslU homohexamer. The assembly of the HslU/HslV complex is dependent on binding of ATP.

It localises to the cytoplasm. In terms of biological role, ATPase subunit of a proteasome-like degradation complex; this subunit has chaperone activity. The binding of ATP and its subsequent hydrolysis by HslU are essential for unfolding of protein substrates subsequently hydrolyzed by HslV. HslU recognizes the N-terminal part of its protein substrates and unfolds these before they are guided to HslV for hydrolysis. The polypeptide is ATP-dependent protease ATPase subunit HslU (Syntrophomonas wolfei subsp. wolfei (strain DSM 2245B / Goettingen)).